An 825-amino-acid chain; its full sequence is Trimethylamine-N-oxide reductase (825 aa).

The segment at residues M1 to A40 is a signal peptide (tat-type signal). Position 187 (S187) interacts with Mo-bis(molybdopterin guanine dinucleotide).

It belongs to the prokaryotic molybdopterin-containing oxidoreductase family. The cofactor is Mo-bis(molybdopterin guanine dinucleotide). Post-translationally, predicted to be exported by the Tat system. The position of the signal peptide cleavage has not been experimentally proven.

Its subcellular location is the periplasm. It catalyses the reaction trimethylamine + 2 Fe(III)-[cytochrome c] + H2O = trimethylamine N-oxide + 2 Fe(II)-[cytochrome c] + 3 H(+). Reduces trimethylamine-N-oxide (TMAO) into trimethylamine; an anaerobic reaction coupled to energy-yielding reactions. The polypeptide is Trimethylamine-N-oxide reductase (torZ) (Haemophilus influenzae (strain ATCC 51907 / DSM 11121 / KW20 / Rd)).